The following is a 172-amino-acid chain: Putative methyltransferase Mtx subunit A (172 aa).

Belongs to the MtrA family. In terms of assembly, may be part of a complex composed of 3 subunits; MtxA, MtxH and MtxX.

This Methanosarcina mazei (strain ATCC BAA-159 / DSM 3647 / Goe1 / Go1 / JCM 11833 / OCM 88) (Methanosarcina frisia) protein is Putative methyltransferase Mtx subunit A (mtxA).